We begin with the raw amino-acid sequence, 186 residues long: Ribosome-recycling factor (186 aa).

This sequence belongs to the RRF family.

It localises to the cytoplasm. In terms of biological role, responsible for the release of ribosomes from messenger RNA at the termination of protein biosynthesis. May increase the efficiency of translation by recycling ribosomes from one round of translation to another. This is Ribosome-recycling factor from Endomicrobium trichonymphae.